Consider the following 415-residue polypeptide: MSAGAGAAVEAGFSSEELLSLRFPLHRACRDGDLVALCSLLPHTPRAHLAAEDSFYGWTPVHWAAHFGKLECLMQLVRAGASLNVSTTRYAQTPAHIAAFGGHPQCLVWLIQAGANINKPDCEGETPIHKAARSGSLECITALVGSGAHTDLRNASGLTAADIAQTQGFQECTQFLLSLQNHQMSRFCHNGTLSGGHESILPTHVSLGTNRKRCLEDSESLGVKKARTRVPSLDHAMPLANGEAEDDADRMHVDRECAAVSDMKNSSSVLNTLTNGSVVNGHLDFPCANQLNGMESRSHPCLTGSNGVSNGQPLSSGQASVSANGTEEPEKTMGINPEMCGSLHLNGSPSSCVASRPSWVGDIGESLHYGHYHGFGDTAESIPELSSVLEHTSCVRVEQRYDSAVLGAMQLHHGS.

ANK repeat units lie at residues 20–49 (SLRF…RAHL), 56–85 (YGWT…SLNV), 90–119 (YAQT…NINK), and 123–152 (EGET…HTDL). Polar residues predominate over residues 303–325 (TGSNGVSNGQPLSSGQASVSANG). Residues 303 to 330 (TGSNGVSNGQPLSSGQASVSANGTEEPE) are disordered.

The protein is Ankyrin repeat domain-containing protein 10 (Ankrd10) of Mus musculus (Mouse).